Reading from the N-terminus, the 191-residue chain is Stress response regulator protein 1 (191 aa).

The 120-residue stretch at 62-181 (SFLLVDDNEI…TNYILQKIEQ (120 aa)) folds into the Response regulatory domain. Asp114 is subject to 4-aspartylphosphate.

In terms of biological role, required for stress adaptation, morphogenesis and virulence. This is Stress response regulator protein 1 (SRR1) from Clavispora lusitaniae (strain ATCC 42720) (Yeast).